A 499-amino-acid chain; its full sequence is Glycerol kinase (499 aa).

Position 12 (Thr12) interacts with ADP. The ATP site is built by Thr12, Thr13, and Ser14. Thr12 lines the sn-glycerol 3-phosphate pocket. Arg16 lines the ADP pocket. Residues Arg82, Glu83, Tyr134, and Asp243 each coordinate sn-glycerol 3-phosphate. The glycerol site is built by Arg82, Glu83, Tyr134, Asp243, and Gln244. ADP contacts are provided by Thr265 and Gly308. Thr265, Gly308, Gln312, and Gly409 together coordinate ATP. Residues Gly409 and Asn413 each contribute to the ADP site.

The protein belongs to the FGGY kinase family. Homotetramer and homodimer (in equilibrium).

The enzyme catalyses glycerol + ATP = sn-glycerol 3-phosphate + ADP + H(+). Its pathway is polyol metabolism; glycerol degradation via glycerol kinase pathway; sn-glycerol 3-phosphate from glycerol: step 1/1. Its activity is regulated as follows. Activated by phosphorylation and inhibited by fructose 1,6-bisphosphate (FBP). Its function is as follows. Key enzyme in the regulation of glycerol uptake and metabolism. Catalyzes the phosphorylation of glycerol to yield sn-glycerol 3-phosphate. This chain is Glycerol kinase, found in Lachnoclostridium phytofermentans (strain ATCC 700394 / DSM 18823 / ISDg) (Clostridium phytofermentans).